The following is a 171-amino-acid chain: 3-hydroxydecanoyl-[acyl-carrier-protein] dehydratase (171 aa).

Residue His70 is part of the active site.

This sequence belongs to the thioester dehydratase family. FabA subfamily. In terms of assembly, homodimer.

It localises to the cytoplasm. It carries out the reaction a (3R)-hydroxyacyl-[ACP] = a (2E)-enoyl-[ACP] + H2O. The catalysed reaction is (3R)-hydroxydecanoyl-[ACP] = (2E)-decenoyl-[ACP] + H2O. The enzyme catalyses (2E)-decenoyl-[ACP] = (3Z)-decenoyl-[ACP]. It participates in lipid metabolism; fatty acid biosynthesis. Functionally, necessary for the introduction of cis unsaturation into fatty acids. Catalyzes the dehydration of (3R)-3-hydroxydecanoyl-ACP to E-(2)-decenoyl-ACP and then its isomerization to Z-(3)-decenoyl-ACP. Can catalyze the dehydratase reaction for beta-hydroxyacyl-ACPs with saturated chain lengths up to 16:0, being most active on intermediate chain length. In Pseudomonas putida (strain W619), this protein is 3-hydroxydecanoyl-[acyl-carrier-protein] dehydratase.